A 447-amino-acid chain; its full sequence is Acidic leucine-rich nuclear phosphoprotein 32-related protein (447 aa).

LRR repeat units follow at residues 49 to 70 (NLQH…PRLG), 71 to 90 (NLQK…EFLV), and 96 to 117 (SFCD…APLA). In terms of domain architecture, LRRCT spans 129-167 (CPVTRLKDYRSRVFGLIKTLKYLDKTDAEGNERPESDDE). The disordered stretch occupies residues 155-447 (DAEGNERPES…EDDDDDDEER (293 aa)). 2 stretches are compositionally biased toward acidic residues: residues 163–194 (ESDD…EIDG) and 215–231 (VDVD…DESE). Polar residues predominate over residues 232 to 242 (QATGVNGTSYR). 5 stretches are compositionally biased toward acidic residues: residues 256–277 (VRED…DNDV), 284–309 (EDSE…EEVD), 336–374 (GDDD…EESG), 397–415 (PINE…DDLP), and 433–447 (DDDD…DEER).

It belongs to the ANP32 family.

The chain is Acidic leucine-rich nuclear phosphoprotein 32-related protein from Arabidopsis thaliana (Mouse-ear cress).